Reading from the N-terminus, the 35-residue chain is Probable protein L3 (35 aa).

In Odocoileus virginianus papillomavirus 1 (DPV), this protein is Probable protein L3.